The following is a 136-amino-acid chain: Urease subunit beta (136 aa).

A disordered region spans residues 112-136 (ENDEYAGVFGDNGTENVNKKGGKRS).

It belongs to the urease beta subunit family. In terms of assembly, heterotrimer of UreA (gamma), UreB (beta) and UreC (alpha) subunits. Three heterotrimers associate to form the active enzyme.

The protein localises to the cytoplasm. It catalyses the reaction urea + 2 H2O + H(+) = hydrogencarbonate + 2 NH4(+). Its pathway is nitrogen metabolism; urea degradation; CO(2) and NH(3) from urea (urease route): step 1/1. The chain is Urease subunit beta from Staphylococcus aureus (strain MRSA252).